We begin with the raw amino-acid sequence, 61 residues long: Progonadoliberin-1 (61 aa).

Gln-1 carries the post-translational modification Pyrrolidone carboxylic acid. Gly-10 carries the glycine amide modification.

Belongs to the GnRH family.

The protein resides in the secreted. Stimulates the secretion of gonadotropins; it stimulates the secretion of both luteinizing and follicle-stimulating hormones. This Ovis aries (Sheep) protein is Progonadoliberin-1 (GNRH1).